The sequence spans 873 residues: Tyrosine-protein kinase receptor TYRO3 (873 aa).

Residues 1-28 (MELRRSMALPRLLLLGLWAAALRDGAVA) form the signal peptide. 2 consecutive Ig-like C2-type domains span residues 29 to 116 (AGMK…KEES) and 127 to 208 (PYFT…ATVQ). The Extracellular segment spans residues 29 to 416 (AGMKFTGSPI…QRQPPYGTSW (388 aa)). N-linked (GlcNAc...) asparagine glycosylation occurs at Asn51. Cystine bridges form between Cys52-Cys105 and Cys148-Cys191. Asn179, Asn184, Asn218, Asn228, Asn281, Asn353, and Asn367 each carry an N-linked (GlcNAc...) asparagine glycan. Fibronectin type-III domains follow at residues 215-308 (PPLN…TLEL) and 310-403 (PSST…AQEV). Residues 417 to 437 (VPVALGILTALVTAVALALIL) form a helical membrane-spanning segment. Residues 438-873 (LRKRRKETRF…ELETEGEKSC (436 aa)) lie on the Cytoplasmic side of the membrane. The Protein kinase domain maps to 505–776 (FTLGRMLGKG…GVLRSQLEMI (272 aa)). ATP contacts are provided by residues 511–519 (LGKGEFGSV) and Lys537. The Proton acceptor role is filled by Asp642. Tyr673 is modified (phosphotyrosine; by autocatalysis). Residues 845 to 873 (VEGERHPEGQEGENKSLLYELETEGEKSC) form a disordered region. The span at 847–858 (GERHPEGQEGEN) shows a compositional bias: basic and acidic residues.

Belongs to the protein kinase superfamily. Tyr protein kinase family. AXL/UFO subfamily. In terms of processing, autophosphorylated on tyrosine residues. As to expression, detected in embryonic retina (at protein level). detected in brain, retina, kidney and in retinal Mueller glia-like cells.

It is found in the cell membrane. It catalyses the reaction L-tyrosyl-[protein] + ATP = O-phospho-L-tyrosyl-[protein] + ADP + H(+). Its function is as follows. Receptor tyrosine kinase that transduces signals from the extracellular matrix into the cytoplasm by binding to several ligands. Regulates many physiological processes including cell survival, migration and differentiation. Ligand binding at the cell surface induces dimerization and autophosphorylation of TYRO3 on its intracellular domain that provides docking sites for downstream signaling molecules. Following activation by ligand, enhances PI3-kinase activity and activates the AKT survival pathway, including nuclear translocation of NF-kappa-B and up-regulation of transcription of NF-kappa-B-regulated genes. This is Tyrosine-protein kinase receptor TYRO3 (TYRO3) from Gallus gallus (Chicken).